Consider the following 561-residue polypeptide: Putative transport protein KPN78578_08530 (561 aa).

Transmembrane regions (helical) follow at residues 8 to 28, 37 to 57, 66 to 86, 94 to 114, and 158 to 178; these read LLNGNYILLLFVVLALGLCLG, LGNSIGVLVVSLLLGQQHFAI, FMLFIFCVGVEAGPNFFSIFF, MLALVMVGSAMLIAMVLGKVF, and HLSLGYALTYLVGLVSLIVGA. RCK C-terminal domains lie at 202 to 288 and 292 to 373; these read LDTD…SFRN and VFDR…RIGF. 5 helical membrane-spanning segments follow: residues 383 to 403, 406 to 426, 447 to 467, 478 to 498, and 540 to 560; these read LLAFCAFFIVGLMIGMITFQF, FSFGIGNAAGLLFAGIMLGFL, FGLMVFMAGVGLSAGAGINNG, AGLIVSLVPVVICFLFGAYVL, and AIANVLLTLAGTLIVIIWPGL.

This sequence belongs to the AAE transporter (TC 2.A.81) family. YbjL subfamily.

Its subcellular location is the cell membrane. In Klebsiella pneumoniae subsp. pneumoniae (strain ATCC 700721 / MGH 78578), this protein is Putative transport protein KPN78578_08530.